The primary structure comprises 233 residues: H-2 class II histocompatibility antigen, A-S alpha chain (233 aa).

Residues 1 to 88 form an alpha-1 region; the sequence is EDDIEADHVG…KRSNSTPATN (88 aa). The Extracellular portion of the chain corresponds to 1-195; that stretch reads EDDIEADHVG…IPAPMSELTE (195 aa). The segment at 89-182 is alpha-2; the sequence is EAPQATVFPK…GLEEPVLKHW (94 aa). The 93-residue stretch at 91-183 folds into the Ig-like C1-type domain; sequence PQATVFPKSP…LEEPVLKHWE (93 aa). An intrachain disulfide couples Cys111 to Cys167. Asn122 carries an N-linked (GlcNAc...) asparagine glycan. Residues 183–195 form a connecting peptide region; it reads EPEIPAPMSELTE. A helical membrane pass occupies residues 196–221; sequence TVVCALGLSVGLVGIVVGTIFIIQGL. The Cytoplasmic segment spans residues 222-233; that stretch reads RSGGTSRHPGPL.

Belongs to the MHC class II family.

The protein localises to the membrane. The polypeptide is H-2 class II histocompatibility antigen, A-S alpha chain (H2-Aa) (Mus musculus (Mouse)).